A 1310-amino-acid polypeptide reads, in one-letter code: Adhesion G protein-coupled receptor A3 (1310 aa).

The signal sequence occupies residues 1 to 27 (MEPPPPLLLLPLALLALLWGGERGAAA). The region spanning 28–70 (LPAGCKHDGRARGTGRAAAAAEGKVVCSSLELAQVLPPDTLPN) is the LRRNT domain. Residues 28–747 (LPAGCKHDGR…TELYTPAASL (720 aa)) are Extracellular-facing. N-linked (GlcNAc...) asparagine glycosylation is found at N70 and N87. LRR repeat units lie at residues 71–92 (RTVT…SFSG), 95–116 (LLER…AFWG), 119–140 (SLKR…VFRG), and 143–164 (NLVR…TFDY). N148, N195, N290, N321, N422, N442, N581, N641, N676, and N717 each carry an N-linked (GlcNAc...) asparagine glycan. The LRRCT domain occupies 176 to 226 (EYLLCDCNILWMHRWVKERNITVRDTRCVYPKSLQAQPVTGVKQELLTCDP). Residues 231–329 (PSFYMTPSHR…GNNTRTVDIV (99 aa)) form the Ig-like domain. The cysteines at positions 253 and 313 are disulfide-linked. In terms of domain architecture, GAIN-B spans 572-739 (LDKQLSFKCN…AVLMDLTGTE (168 aa)). The tract at residues 690–739 (AAQWDFDLLNGQGGWKSDGCCILYSDENITTIQCGSLGNYAVLMDLTGTE) is GPS. C709 and C723 are disulfide-bonded. Residues 748–768 (LHPVVYTTAITLLLCLLAVII) traverse the membrane as a helical segment. Topologically, residues 769 to 785 (SYMYHHSLIRISLKSWH) are cytoplasmic. A helical membrane pass occupies residues 786–806 (MLVNLCFHILLTCVVFVGGIT). At 807-815 (QTRNASVCQ) the chain is on the extracellular side. Residue N810 is glycosylated (N-linked (GlcNAc...) asparagine). A helical membrane pass occupies residues 816–836 (AVGIILHYSTLATVLWVGVTA). Over 837 to 865 (RNIYKQVTKKAKRCQDPDEPPAPPRPMLR) the chain is Cytoplasmic. A helical transmembrane segment spans residues 866 to 886 (FYLIGGGIPIIVCGITAAANI). Topologically, residues 887-908 (KNYGSRPSAPYCWMAWEPSLGA) are extracellular. The helical transmembrane segment at 909–929 (FYGPASFITFVNCMYFLSIFI) threads the bilayer. The Cytoplasmic segment spans residues 930-985 (QLKRHPERKYELKEPTEEQQRLAANENGEINHQDSMSLSLISTSTLENEHSFQSQL). The chain crosses the membrane as a helical span at residues 986 to 1006 (LGASLTLLLYVILWMFGAMAV). Over 1007-1013 (SLYYPLD) the chain is Extracellular. The helical transmembrane segment at 1014 to 1034 (LVFSFFFGATCLSFSAFMMVH) threads the bilayer. Over 1035-1310 (HCINREDVRL…TGLWKHETTV (276 aa)) the chain is Cytoplasmic. 3 disordered regions span residues 1065–1084 (PPNS…SSAE), 1187–1208 (VEGS…GHSR), and 1221–1264 (YNPP…ADLE). The span at 1222-1239 (NPPQQDSSDACSTLPKSS) shows a compositional bias: polar residues. A PDZ-binding motif is present at residues 1308 to 1310 (TTV).

This sequence belongs to the G-protein coupled receptor 2 family. Adhesion G-protein coupled receptor (ADGR) subfamily. Interacts (via PDZ-binding motif) with DLG1. As to expression, expressed by spermatogonial progenitor cells located within the outer cell layer of the seminiferous tubule and by multipotent adult spermatogonial-derived stem cells.

It localises to the membrane. Its function is as follows. Orphan receptor that may have a role in planar cell polarity pathway. The sequence is that of Adhesion G protein-coupled receptor A3 (Adgra3) from Mus musculus (Mouse).